A 564-amino-acid chain; its full sequence is MTAVAPRLENYAEPTRPAPTGGARKGTLAWKMLTTTDHKLLGMMYIVMSFVWFFVGGLMALLIRAELFSPGLQFLSNEQFNQLFTLHGTIMLLAFGTPVVWGFSNYILPLQIGAPDVAFPRLNAFGFWITQIGVVAMLAGFLTPGGAADFGWTMYLPLADSIHSPGVGGDFWIIGVGATGVGTIASAVNMITTILCMRAPGMTMFRMPIFCWNIFVASVIVLLIFPLLTAAALGVMYDRKLGGHIYDPGNGGAILWQHLFWFFGHPEVYVLALPFFGIVSEVIPVFARKPMFGYIGLVFATLSIGMLSMAVWAHHMFVTGAILLPFFSFMTFLISVPTGVKFFNWLGTMWRGHISWETPMTWTMGFLVTFLFGGLTGIMLASPPLDFHISDTYFVVAHFHYTLFGTVVFASYAGVYFWFPKMTGRMLDERLGKIHFWITFVGFHGTFLVQHWVGNEGMPRRYADYLESDGFTTLNQISTVFSFLLGVSVIPFIWNVFKSYRYGEIVTVDDPWGYGNSLEWATSCPPPRHNFTSLPRIRSERPAFELHYPHMVERMRREAHIGHH.

A disordered region spans residues 1-23; sequence MTAVAPRLENYAEPTRPAPTGGA. 7 helical membrane-spanning segments follow: residues 43-63, 83-103, 122-142, 171-191, 214-234, 259-279, and 292-312; these read MMYI…ALLI, LFTL…VWGF, LNAF…AGFL, FWII…VNMI, IFVA…AALG, LFWF…FGIV, and FGYI…MAVW. His-87 contributes to the Fe(II)-heme a binding site. Residues His-265 and Tyr-269 each coordinate Cu cation. A cross-link (1'-histidyl-3'-tyrosine (His-Tyr)) is located at residues 265–269; that stretch reads HPEVY. Cu cation contacts are provided by His-314 and His-315. Helical transmembrane passes span 316–336 and 360–380; these read MFVT…LISV and MTWT…GIML. Residue His-398 participates in heme a3 binding. Transmembrane regions (helical) follow at residues 399–419, 434–454, and 477–497; these read FHYT…YFWF, IHFW…HWVG, and ISTV…WNVF. Position 400 (His-400) interacts with Fe(II)-heme a.

It belongs to the heme-copper respiratory oxidase family. As to quaternary structure, associates with subunits II, III and IV to form cytochrome c oxidase. Cu(2+) is required as a cofactor. It depends on heme as a cofactor.

It is found in the cell membrane. It carries out the reaction 4 Fe(II)-[cytochrome c] + O2 + 8 H(+)(in) = 4 Fe(III)-[cytochrome c] + 2 H2O + 4 H(+)(out). It participates in energy metabolism; oxidative phosphorylation. Cytochrome c oxidase is the component of the respiratory chain that catalyzes the reduction of oxygen to water. Subunits 1-3 form the functional core of the enzyme complex. CO I is the catalytic subunit of the enzyme. Electrons originating in cytochrome c are transferred via the copper A center of subunit 2 and heme A of subunit 1 to the bimetallic center formed by heme A3 and copper B. The protein is Cytochrome c oxidase subunit 1 (ctaD) of Corynebacterium diphtheriae (strain ATCC 700971 / NCTC 13129 / Biotype gravis).